Here is a 443-residue protein sequence, read N- to C-terminus: Tol-Pal system protein TolB (443 aa).

Residues Met1–Ala18 form the signal peptide.

This sequence belongs to the TolB family. The Tol-Pal system is composed of five core proteins: the inner membrane proteins TolA, TolQ and TolR, the periplasmic protein TolB and the outer membrane protein Pal. They form a network linking the inner and outer membranes and the peptidoglycan layer.

It localises to the periplasm. Part of the Tol-Pal system, which plays a role in outer membrane invagination during cell division and is important for maintaining outer membrane integrity. This Rickettsia prowazekii (strain Madrid E) protein is Tol-Pal system protein TolB.